A 540-amino-acid polypeptide reads, in one-letter code: Signal peptide peptidase-like 2 (540 aa).

A signal peptide spans 1–27; sequence MDSLRFLRILLLSSSILLLSLRSTVTA. Topologically, residues 28 to 196 are lumenal; the sequence is GDIVHQDNLA…PRRPAVDVAE (169 aa). N83 is a glycosylation site (N-linked (GlcNAc...) asparagine). The PA domain occupies 95 to 173; the sequence is SCTPLKNKLS…QDAGASLQKM (79 aa). N176 carries an N-linked (GlcNAc...) asparagine glycan. The chain crosses the membrane as a helical span at residues 197–217; the sequence is VFLWLMAIGTILCASYWSAWS. Topologically, residues 218–248 are cytoplasmic; that stretch reads AREAAIEHDKLLKDAIDEIPNTNDGGSGVVE. The chain crosses the membrane as a helical span at residues 249-269; sequence INSISAIFFVVLASGFLVILY. Topologically, residues 270 to 278 are lumenal; sequence KLMSYWFVE. A helical membrane pass occupies residues 279–299; that stretch reads LLVVVFCIGGVEGLQTCLVAL. The Cytoplasmic portion of the chain corresponds to 300–319; it reads LSRWFQRAADTYVKVPFLGP. A helical transmembrane segment spans residues 320–340; that stretch reads ISYLTLAVSPFCIVFAVLWAV. Topologically, residues 341–345 are lumenal; it reads YRVHS. The chain crosses the membrane as a helical span at residues 346–366; that stretch reads FAWIGQDVLGIALIITVLQIV. The Cytoplasmic portion of the chain corresponds to 367–370; sequence HVPN. A helical transmembrane segment spans residues 371-391; that stretch reads LKVGTVLLSCAFLYDIFWVFV. Residue D385 is part of the active site. Topologically, residues 392 to 429 are lumenal; sequence SKKLFHESVMIVVARGDKSGEDGIPMLLKIPRMFDPWG. Residues 430–450 form a helical membrane-spanning segment; the sequence is GYSIIGFGDILLPGLLIAFAL. D438 is a catalytic residue. Residues 451 to 462 are Cytoplasmic-facing; the sequence is RYDWLANKTLRT. Residues 463 to 483 form a helical membrane-spanning segment; sequence GYFIWAMVAYGLGLLITYVAL. Residues 484 to 488 lie on the Lumenal side of the membrane; that stretch reads NLMDG. A helical transmembrane segment spans residues 489–509; it reads HGQPALLYIVPFTLGTMLTLA. The PAL signature appears at 492-494; the sequence is PAL. The Cytoplasmic portion of the chain corresponds to 510 to 540; the sequence is RKRDDLWILWTKGEPERACPHHVRLEQCSEK.

This sequence belongs to the peptidase A22B family. In terms of processing, glycosylated. In terms of tissue distribution, ubiquitous.

The protein resides in the endosome membrane. Its function is as follows. Intramembrane-cleaving aspartic protease (I-CLiP) that cleaves type II membrane signal peptides in the hydrophobic plane of the membrane. The protein is Signal peptide peptidase-like 2 (SPPL2) of Arabidopsis thaliana (Mouse-ear cress).